The chain runs to 171 residues: Translationally-controlled tumor protein homolog (171 aa).

A TCTP domain is found at 1 to 171; the sequence is MKIWKDVFTG…FKHGLEEEKF (171 aa).

It belongs to the TCTP family.

The protein localises to the cytoplasm. Functionally, involved in calcium binding and microtubule stabilization. The polypeptide is Translationally-controlled tumor protein homolog (Anopheles gambiae (African malaria mosquito)).